A 167-amino-acid polypeptide reads, in one-letter code: ATP synthase subunit b (167 aa).

The chain crosses the membrane as a helical span at residues alanine 9–leucine 29.

This sequence belongs to the ATPase B chain family. In terms of assembly, F-type ATPases have 2 components, F(1) - the catalytic core - and F(0) - the membrane proton channel. F(1) has five subunits: alpha(3), beta(3), gamma(1), delta(1), epsilon(1). F(0) has three main subunits: a(1), b(2) and c(10-14). The alpha and beta chains form an alternating ring which encloses part of the gamma chain. F(1) is attached to F(0) by a central stalk formed by the gamma and epsilon chains, while a peripheral stalk is formed by the delta and b chains.

The protein localises to the cell membrane. F(1)F(0) ATP synthase produces ATP from ADP in the presence of a proton or sodium gradient. F-type ATPases consist of two structural domains, F(1) containing the extramembraneous catalytic core and F(0) containing the membrane proton channel, linked together by a central stalk and a peripheral stalk. During catalysis, ATP synthesis in the catalytic domain of F(1) is coupled via a rotary mechanism of the central stalk subunits to proton translocation. Functionally, component of the F(0) channel, it forms part of the peripheral stalk, linking F(1) to F(0). The protein is ATP synthase subunit b of Leuconostoc mesenteroides subsp. mesenteroides (strain ATCC 8293 / DSM 20343 / BCRC 11652 / CCM 1803 / JCM 6124 / NCDO 523 / NBRC 100496 / NCIMB 8023 / NCTC 12954 / NRRL B-1118 / 37Y).